A 309-amino-acid chain; its full sequence is Porphobilinogen deaminase (309 aa).

Cysteine 242 carries the post-translational modification S-(dipyrrolylmethanemethyl)cysteine.

This sequence belongs to the HMBS family. In terms of assembly, monomer. The cofactor is dipyrromethane.

It catalyses the reaction 4 porphobilinogen + H2O = hydroxymethylbilane + 4 NH4(+). The protein operates within porphyrin-containing compound metabolism; protoporphyrin-IX biosynthesis; coproporphyrinogen-III from 5-aminolevulinate: step 2/4. Its function is as follows. Tetrapolymerization of the monopyrrole PBG into the hydroxymethylbilane pre-uroporphyrinogen in several discrete steps. The protein is Porphobilinogen deaminase of Shewanella frigidimarina (strain NCIMB 400).